Consider the following 198-residue polypeptide: Probable GTP-binding protein EngB (198 aa).

The EngB-type G domain maps to 22 to 195 (DLPEIALAGR…WKAIHKFTKT (174 aa)). GTP contacts are provided by residues 30–37 (GRSNVGKS), 57–61 (GKTQT), 75–78 (DVPG), 142–145 (TKAD), and 174–176 (FSS). Mg(2+) is bound by residues serine 37 and threonine 59.

Belongs to the TRAFAC class TrmE-Era-EngA-EngB-Septin-like GTPase superfamily. EngB GTPase family. Requires Mg(2+) as cofactor.

Necessary for normal cell division and for the maintenance of normal septation. The protein is Probable GTP-binding protein EngB of Bacillus cereus (strain B4264).